The primary structure comprises 429 residues: Histidine--tRNA ligase (429 aa).

The protein belongs to the class-II aminoacyl-tRNA synthetase family. In terms of assembly, homodimer.

It localises to the cytoplasm. It catalyses the reaction tRNA(His) + L-histidine + ATP = L-histidyl-tRNA(His) + AMP + diphosphate + H(+). In Streptococcus pneumoniae serotype 4 (strain ATCC BAA-334 / TIGR4), this protein is Histidine--tRNA ligase.